The primary structure comprises 89 residues: Co-chaperonin GroES (89 aa).

This sequence belongs to the GroES chaperonin family. Heptamer of 7 subunits arranged in a ring. Interacts with the chaperonin GroEL.

The protein resides in the cytoplasm. In terms of biological role, together with the chaperonin GroEL, plays an essential role in assisting protein folding. The GroEL-GroES system forms a nano-cage that allows encapsulation of the non-native substrate proteins and provides a physical environment optimized to promote and accelerate protein folding. GroES binds to the apical surface of the GroEL ring, thereby capping the opening of the GroEL channel. In Fervidobacterium nodosum (strain ATCC 35602 / DSM 5306 / Rt17-B1), this protein is Co-chaperonin GroES.